The chain runs to 527 residues: Zinc finger CCCH-type with G patch domain-containing protein (527 aa).

The tract at residues 97–126 (GEVSGSSSDMREREDEREEEDDGEVEGEVD) is disordered. Positions 111–125 (DEREEEDDGEVEGEV) are enriched in acidic residues. The C3H1-type zinc-finger motif lies at 173–200 (QKSMKPCPFFLEDKCRFADNCRFSHGEV). The interval 268–312 (LREDDLPSCSDSEDDDNGEGEAAFPRVLTQEEDWAPSRSSSAFGG) is disordered. Residues 317 to 363 (TRGIGSKLMLKMGYEYGKGLGKTSEGRVEPVLAVVLPKGKSLDQCAE) form the G-patch domain. Disordered stretches follow at residues 369 to 396 (TQRK…AHNT), 410 to 444 (LGNG…YKGG), and 505 to 527 (KAQE…MTEF). Basic residues predominate over residues 384–393 (RNKRTRKARA). The segment covering 511 to 527 (AQRENRKADTHKKMTEF) has biased composition (basic and acidic residues).

The protein resides in the nucleus. Its function is as follows. Transcription repressor that specifically binds the 5'-GGAG[GA]A[GA]A-3' consensus sequence. Represses transcription by recruiting the chromatin multiprotein complex NuRD to target promoters. Negatively regulates expression of EGFR, a gene involved in cell proliferation, survival and migration. This Salmo salar (Atlantic salmon) protein is Zinc finger CCCH-type with G patch domain-containing protein (zgpat).